Reading from the N-terminus, the 417-residue chain is DNA-directed RNA polymerase subunit beta (417 aa).

The protein belongs to the RNA polymerase beta chain family. In terms of assembly, in plastids the minimal PEP RNA polymerase catalytic core is composed of four subunits: alpha, beta, beta', and beta''. When a (nuclear-encoded) sigma factor is associated with the core the holoenzyme is formed, which can initiate transcription.

Its subcellular location is the plastid. It is found in the chloroplast. It carries out the reaction RNA(n) + a ribonucleoside 5'-triphosphate = RNA(n+1) + diphosphate. DNA-dependent RNA polymerase catalyzes the transcription of DNA into RNA using the four ribonucleoside triphosphates as substrates. This is DNA-directed RNA polymerase subunit beta (rpoB) from Saponaria officinalis (Common soapwort).